A 35-amino-acid chain; its full sequence is MEVNIFGLTATALFIIIPTSFLLILYVKTASNQSV.

Residues 5–25 (IFGLTATALFIIIPTSFLLIL) form a helical membrane-spanning segment.

Belongs to the PsbM family. As to quaternary structure, PSII is composed of 1 copy each of membrane proteins PsbA, PsbB, PsbC, PsbD, PsbE, PsbF, PsbH, PsbI, PsbJ, PsbK, PsbL, PsbM, PsbT, PsbX, PsbY, PsbZ, Psb30/Ycf12, at least 3 peripheral proteins of the oxygen-evolving complex and a large number of cofactors. It forms dimeric complexes.

It is found in the plastid. It localises to the chloroplast thylakoid membrane. In terms of biological role, one of the components of the core complex of photosystem II (PSII). PSII is a light-driven water:plastoquinone oxidoreductase that uses light energy to abstract electrons from H(2)O, generating O(2) and a proton gradient subsequently used for ATP formation. It consists of a core antenna complex that captures photons, and an electron transfer chain that converts photonic excitation into a charge separation. This subunit is found at the monomer-monomer interface. This chain is Photosystem II reaction center protein M, found in Tetradesmus obliquus (Green alga).